Here is a 171-residue protein sequence, read N- to C-terminus: Transcription factor E (171 aa).

The 87-residue stretch at 5 to 91 (DNKAVRGYIQ…LWKLDLDNSV (87 aa)) folds into the HTH TFE/IIEalpha-type domain.

It belongs to the TFE family. As to quaternary structure, monomer. Interaction with RNA polymerase subunits RpoF and RpoE is necessary for Tfe stimulatory transcription activity. Able to interact with Tbp and RNA polymerase in the absence of DNA promoter. Interacts both with the preinitiation and elongation complexes.

Transcription factor that plays a role in the activation of archaeal genes transcribed by RNA polymerase. Facilitates transcription initiation by enhancing TATA-box recognition by TATA-box-binding protein (Tbp), and transcription factor B (Tfb) and RNA polymerase recruitment. Not absolutely required for transcription in vitro, but particularly important in cases where Tbp or Tfb function is not optimal. It dynamically alters the nucleic acid-binding properties of RNA polymerases by stabilizing the initiation complex and destabilizing elongation complexes. Seems to translocate with the RNA polymerase following initiation and acts by binding to the non template strand of the transcription bubble in elongation complexes. This chain is Transcription factor E, found in Methanocella arvoryzae (strain DSM 22066 / NBRC 105507 / MRE50).